Consider the following 229-residue polypeptide: Heptaprenylglyceryl phosphate synthase (229 aa).

Sn-glycerol 1-phosphate is bound at residue Lys12. Mg(2+) is bound by residues Asp14 and Ser40. Residues 159-164, Gly189, and 209-210 contribute to the sn-glycerol 1-phosphate site; these read YLEYSG and GN.

It belongs to the GGGP/HepGP synthase family. Group I subfamily. Homodimer. Requires Mg(2+) as cofactor.

The enzyme catalyses sn-glycerol 1-phosphate + all-trans-heptaprenyl diphosphate = 3-heptaprenyl-sn-glycero-1-phosphate + diphosphate. It participates in membrane lipid metabolism; glycerophospholipid metabolism. Its function is as follows. Prenyltransferase that catalyzes in vivo the transfer of the heptaprenyl moiety of heptaprenyl pyrophosphate (HepPP; 35 carbon atoms) to the C3 hydroxyl of sn-glycerol-1-phosphate (G1P), producing heptaprenylglyceryl phosphate (HepGP). This reaction is an ether-bond-formation step in the biosynthesis of archaea-type G1P-based membrane lipids found in Bacillales. In Bacillus cereus (strain ATCC 14579 / DSM 31 / CCUG 7414 / JCM 2152 / NBRC 15305 / NCIMB 9373 / NCTC 2599 / NRRL B-3711), this protein is Heptaprenylglyceryl phosphate synthase.